Here is a 299-residue protein sequence, read N- to C-terminus: Homoserine O-acetyltransferase (299 aa).

The active-site Acyl-thioester intermediate is the Cys142. Substrate-binding residues include Lys163 and Ser192. Residue His235 is the Proton acceptor of the active site. Glu237 is a catalytic residue. Arg249 contributes to the substrate binding site.

This sequence belongs to the MetA family.

It is found in the cytoplasm. The catalysed reaction is L-homoserine + acetyl-CoA = O-acetyl-L-homoserine + CoA. The protein operates within amino-acid biosynthesis; L-methionine biosynthesis via de novo pathway; O-acetyl-L-homoserine from L-homoserine: step 1/1. In terms of biological role, transfers an acetyl group from acetyl-CoA to L-homoserine, forming acetyl-L-homoserine. The polypeptide is Homoserine O-acetyltransferase (Synechococcus sp. (strain ATCC 27144 / PCC 6301 / SAUG 1402/1) (Anacystis nidulans)).